Consider the following 704-residue polypeptide: Elongation factor G 1 (704 aa).

Residues 8-291 (ERYRNIGISA…AVIDYLPSPA (284 aa)) form the tr-type G domain. Residues 17–24 (AHIDAGKT), 88–92 (DTPGH), and 142–145 (NKMD) contribute to the GTP site.

Belongs to the TRAFAC class translation factor GTPase superfamily. Classic translation factor GTPase family. EF-G/EF-2 subfamily.

Its subcellular location is the cytoplasm. Catalyzes the GTP-dependent ribosomal translocation step during translation elongation. During this step, the ribosome changes from the pre-translocational (PRE) to the post-translocational (POST) state as the newly formed A-site-bound peptidyl-tRNA and P-site-bound deacylated tRNA move to the P and E sites, respectively. Catalyzes the coordinated movement of the two tRNA molecules, the mRNA and conformational changes in the ribosome. This chain is Elongation factor G 1, found in Burkholderia pseudomallei (strain 1710b).